Reading from the N-terminus, the 331-residue chain is Glutamyl-tRNA reductase (331 aa).

Substrate-binding positions include 49-52, serine 107, 112-114, and glutamine 118; these read TCNR and EDQ. Cysteine 50 acts as the Nucleophile in catalysis. Position 184–189 (184–189) interacts with NADP(+); sequence GNGEIG.

The protein belongs to the glutamyl-tRNA reductase family. As to quaternary structure, homodimer.

The catalysed reaction is (S)-4-amino-5-oxopentanoate + tRNA(Glu) + NADP(+) = L-glutamyl-tRNA(Glu) + NADPH + H(+). It functions in the pathway porphyrin-containing compound metabolism; protoporphyrin-IX biosynthesis; 5-aminolevulinate from L-glutamyl-tRNA(Glu): step 1/2. In terms of biological role, catalyzes the NADPH-dependent reduction of glutamyl-tRNA(Glu) to glutamate 1-semialdehyde (GSA). This chain is Glutamyl-tRNA reductase, found in Acetivibrio thermocellus (strain ATCC 27405 / DSM 1237 / JCM 9322 / NBRC 103400 / NCIMB 10682 / NRRL B-4536 / VPI 7372) (Clostridium thermocellum).